We begin with the raw amino-acid sequence, 1732 residues long: Transient receptor potential cation channel subfamily M member 3 (1732 aa).

At 1-894 (MPEPWGTVYF…RKIYEFYNAP (894 aa)) the chain is on the cytoplasmic side. 4 calmodulin-binding regions span residues 192-215 (NFEL…MTTG), 300-323 (TGKY…QKIN), 601-624 (RKRF…KLLG), and 793-816 (RKNS…LEFK). The tract at residues 617–625 (PKALKLLGM) is required for the inhibitory action of G-beta/gamma-subunits of heterotrimeric G-proteins. Residue Ser-796 participates in 1,2-dioctanoyl-sn-glycero-3-phospho-(1D-myo-inositol-4,5-bisphosphate) binding. Residues 895-918 (IVKFWFYTLAYIGYLMLFNYIVLV) traverse the membrane as a helical segment. Residues 919-925 (KMERWPS) are Extracellular-facing. The helical transmembrane segment at 926–948 (TQEWIVISYIFTLGIEKMREILM) threads the bilayer. The Cytoplasmic portion of the chain corresponds to 949–964 (SEPGKLLQKVKVWLQE). Residues 965–985 (YWNVTDLIAILLFSVGMILRL) form a helical membrane-spanning segment. Topologically, residues 986-989 (QDQP) are extracellular. The chain crosses the membrane as a helical span at residues 990–1013 (FRSDGRVIYCVNIIYWYIRLLDIF). Residues 1014–1028 (GVNKYLGPYVMMIGK) are Cytoplasmic-facing. 1,2-dioctanoyl-sn-glycero-3-phospho-(1D-myo-inositol-4,5-bisphosphate) is bound by residues Lys-1017 and Tyr-1018. A helical membrane pass occupies residues 1029 to 1056 (MMIDMMYFVIIMLVVLMSFGVARQAILF). Topologically, residues 1057–1111 (PNEEPSWKLAKNIFYMPYWMIYGEVFADQIDPPCGQNETREDGKIIQLPPCKTGA) are extracellular. Residues 1112–1137 (WIVPAIMACYLLVANILLVNLLIAVF) traverse the membrane as a helical segment. Topologically, residues 1138–1732 (NNTFFEVKSI…AFQSFESKHN (595 aa)) are cytoplasmic. Residues 1241–1301 (ERIRVTSERV…LERLTGLERA (61 aa)) adopt a coiled-coil conformation. Residues 1459–1476 (PVPSTAPSSSAYATLAPT) are compositionally biased toward low complexity. Disordered regions lie at residues 1459–1478 (PVPS…PTDR) and 1611–1732 (REAE…SKHN). 3 stretches are compositionally biased toward polar residues: residues 1635 to 1653 (AISS…NNIT), 1690 to 1701 (NTASLRNPFQRS), and 1720 to 1732 (RTSA…SKHN).

It belongs to the transient receptor (TC 1.A.4) family. LTrpC subfamily. TRPM3 sub-subfamily. Homotetramer. Interacts with TRPM1; the interaction results in the formation of a heteromultimeric cation channel complex that are functionally different from the homomeric channels. In terms of tissue distribution, expressed primarily in the kidney and, at lower levels, in brain, testis, ovary, pancreas and spinal cord. Expression in the brain and kidney was determined at protein level. In the kidney, expressed predominantly in the collecting tubular epithelium in the medulla, medullary rays, and periglomerular regions; in the brain, highest levels are found in the cerebellum, choroid plexus, the locus coeruleus, the posterior thalamus and the substantia nigra. Down-regulated in renal tumors compared to normal kidney. Expressed in the lens.

The protein localises to the cell membrane. The catalysed reaction is Ca(2+)(in) = Ca(2+)(out). It catalyses the reaction Mn(2+)(in) = Mn(2+)(out). The enzyme catalyses Zn(2+)(in) = Zn(2+)(out). It carries out the reaction Mg(2+)(in) = Mg(2+)(out). Activated by the neurosteroid pregnelonone sulfate (PregS); PregS activates the channel by shifting its current-voltage activation curve toward more negative membrane potentials and also potentiates temperature-induced activation. Activated by sphingosine. Activated by heat. Intracellular Ca(2+) inhibits TRPM3 probably via interaction with Ca(2+)/calmodulin. Intracellular Mg(2+) inhibits TRPM3 activity. Both intracellular and extracellular protons block TRPM3 through propable binding sites in the pore region. Positively regulated by phosphoinositide phosphoinositol 4,5-biphosphate (PI(4,5)P2). Strongly inhibited by activation of G(i)-coupled receptors via direct binding with G-betagamma-subunits of heterotrimeric G-proteins. In terms of biological role, constitutively active, non-selective divalent cation-conducting channel that is permeable to Ca(2+), Mn(2+), and Mg(2+), with a high permeability for Ca(2+). However, can be enhanced by increasing temperature and by ligands, including the endogenous neurosteroid pregnenolone sulfate and sphingosine-1 and suppressed by intracellular Mg(2+). Implicated in a variety of cellular processes, including insulin/peptide secretion, vascular constriction and dilation, noxious heat sensing, inflammatory and spontaneous pain sensitivity. In neurons of the dorsal root ganglia, functions as thermosensitive channel for the detection of noxious heat and spontaneous pain. Suggested to function as an ionotropic steroid receptor in beta-cell, indeed pregnenolone sulfate leads to Ca(2+) influx and enhanced insulin secretion. Mediates Zn(2+) uptake into the lumen of pancreatic beta cell secretory granules, thereby regulating insulin secretion. Forms heteromultimeric ion channels with TRPM1 which are permeable for Ca(2+) and Zn(2+) ions. Exists as multiple splice variants which differ significantly in their biophysical properties. The chain is Transient receptor potential cation channel subfamily M member 3 from Homo sapiens (Human).